A 244-amino-acid polypeptide reads, in one-letter code: tRNA pseudouridine synthase B (244 aa).

Aspartate 46 functions as the Nucleophile in the catalytic mechanism.

Belongs to the pseudouridine synthase TruB family. Type 1 subfamily.

It carries out the reaction uridine(55) in tRNA = pseudouridine(55) in tRNA. Its function is as follows. Responsible for synthesis of pseudouridine from uracil-55 in the psi GC loop of transfer RNAs. The protein is tRNA pseudouridine synthase B of Bordetella bronchiseptica (strain ATCC BAA-588 / NCTC 13252 / RB50) (Alcaligenes bronchisepticus).